A 101-amino-acid chain; its full sequence is Small ribosomal subunit protein uS14 (101 aa).

The protein belongs to the universal ribosomal protein uS14 family. As to quaternary structure, part of the 30S ribosomal subunit. Contacts proteins S3 and S10.

Its function is as follows. Binds 16S rRNA, required for the assembly of 30S particles and may also be responsible for determining the conformation of the 16S rRNA at the A site. This is Small ribosomal subunit protein uS14 from Gluconacetobacter diazotrophicus (strain ATCC 49037 / DSM 5601 / CCUG 37298 / CIP 103539 / LMG 7603 / PAl5).